We begin with the raw amino-acid sequence, 867 residues long: Respiratory burst oxidase homolog protein B (867 aa).

Residues 1 to 13 (MEIENTRDSDSMR) are compositionally biased toward basic and acidic residues. The disordered stretch occupies residues 1 to 20 (MEIENTRDSDSMRGSRVGFS). The Cytoplasmic segment spans residues 1 to 322 (MEIENTRDSD…DYFIEDNWKR (322 aa)). 2 positions are modified to phosphoserine; by CPK: serine 82 and serine 97. EF-hand-like regions lie at residues 141-149 (AVNGMLTKS) and 175-186 (RCITSPAVTKDE). EF-hand domains follow at residues 198 to 233 (SFDA…SASA) and 242 to 277 (NSDE…APSH). The Ca(2+) site is built by aspartate 211, aspartate 213, aspartate 215, arginine 217, and glutamate 222. A helical transmembrane segment spans residues 323 to 343 (IWVMALWLSICAGLFTWKFIQ). At 344-358 (YKRRAVFDVMGYCVS) the chain is on the extracellular side. Residues 359–379 (VAKGGAETTKFNMALVLLPVC) form a helical membrane-spanning segment. The 159-residue stretch at 361-519 (KGGAETTKFN…LFVIVYVLFI (159 aa)) folds into the Ferric oxidoreductase domain. Topologically, residues 380–407 (RNTITWLRSRTKLGKIIPFDDNINFHKV) are cytoplasmic. The helical transmembrane segment at 408–428 (IAFGIAVGVGLHAISHLTCDF) threads the bilayer. The Extracellular segment spans residues 429 to 463 (PRLLHATDEEYEPMKPFFGDERPNNYWWFVKGTEG). Residues 464 to 484 (WTGVVMVVLMIIAYVLAQPWF) traverse the membrane as a helical segment. Topologically, residues 485–506 (RRNRLNLPSTIKKLTGFNAFWY) are cytoplasmic. Residues 507 to 527 (SHHLFVIVYVLFIIHGYFLYL) form a helical membrane-spanning segment. At 528-686 (SKKWYKKTTW…APAQDYKKYD (159 aa)) the chain is on the extracellular side. Residues 558–681 (SGYKAVKILK…DGPYGAPAQD (124 aa)) enclose the FAD-binding FR-type domain. A helical transmembrane segment spans residues 687 to 707 (VVLLVGLGIGATPLISIVKDV). Over 708 to 867 (LNNIKQQKNI…TKFEFHKENF (160 aa)) the chain is Cytoplasmic.

This sequence belongs to the RBOH (TC 5.B.1.3) family. As to quaternary structure, monomer and homodimer. Post-translationally, phosphorylation at Ser-82 and Ser-97 is required for full activity of RBOHB. Not phosphorylated at Ser-89. Phosphorylation at Ser-82 is induced by fungal elicitor treatment.

The protein resides in the cell membrane. With respect to regulation, inhibited by diphenylene iodinium (DPI). Functionally, calcium-dependent NADPH oxidase that generates superoxide. Involved in the massive phase II oxidative burst induced by pathogen infection. This Solanum tuberosum (Potato) protein is Respiratory burst oxidase homolog protein B (RBOHB).